Here is a 508-residue protein sequence, read N- to C-terminus: Non-structural protein 1 (508 aa).

Residues 424–453 (NTESTTTNNAQSPVSDPVNASANVKTSPAG) are compositionally biased toward polar residues. Positions 424–464 (NTESTTTNNAQSPVSDPVNASANVKTSPAGTHTDESVMKKE) are disordered. Over residues 455-464 (HTDESVMKKE) the composition is skewed to basic and acidic residues.

This chain is Non-structural protein 1 (Segment-5), found in Banna virus (BAV).